The chain runs to 256 residues: Homeobox-leucine zipper protein HOX18 (256 aa).

The interval 52-117 (YDHGRDEEQA…GGGGGTRKKL (66 aa)) is disordered. Gly residues predominate over residues 102 to 112 (DGGSGSGGGGG). Residues 112–171 (GTRKKLQLTKEQSTLLEDSFRVHNILSHAQKHELARQLKLKPRQVEVWFQNRRARTKLKQ) constitute a DNA-binding region (homeobox). The tract at residues 170–214 (KQTEVDCEFLKRCCESLTEENKQLKHELMELRRLASAAAAAAGSQ) is leucine-zipper.

This sequence belongs to the HD-ZIP homeobox family. Class II subfamily. As to expression, expressed in roots, leaf sheaths and blades and panicles.

It localises to the nucleus. Its function is as follows. Probable transcription factor. The polypeptide is Homeobox-leucine zipper protein HOX18 (HOX18) (Oryza sativa subsp. indica (Rice)).